The chain runs to 485 residues: MDKAVSKTNRMAAEISQHGVKEYLAQQQHKGLLRFLTCGSVDDGKSTLIGRLLHDSAQIYEDQLASLKNDSAKMGTTGEAIDLALLVDGLQAEREQGITIDVAYRYFSSDKRKFIIADTPGHEQYTRNMATGASTCDLAVILVDARYGVQTQTKRHAFIASLLGIRHFVVAINKMDLLGFDEQVFNRIRNDFSEFVKGFGELDIHFVPLSALNGDNVVEPSLHTPWYQGGTLLELLETIDTQRELSALPARFPVQYVSRPNLDFRGFAGTLASGVIKVGDQVVALPSGKRSKVERIVTFDGDLPEVTAGQAVTITLEDEIDISRGDLLALPDSAPQVANQIIADLVWMDEKPLQLGQLYDIKVAGKKTQASVTAIDYVVDVNTLARSSAASVEGEGLGLNAIARVTLELTEDIVFDAYSLVRDTGGMILIDRLSNATVAAVMVVSGQHVSKQVSSPFSAFELEFNALVRKHFPHWQAIDISKLGA.

In terms of domain architecture, tr-type G spans 30-243; that stretch reads KGLLRFLTCG…ELLETIDTQR (214 aa). The tract at residues 39-46 is G1; it reads GSVDDGKS. 39-46 lines the GTP pocket; the sequence is GSVDDGKS. The tract at residues 97–101 is G2; sequence GITID. Positions 118–121 are G3; that stretch reads DTPG. GTP-binding positions include 118 to 122 and 173 to 176; these read DTPGH and NKMD. The segment at 173 to 176 is G4; the sequence is NKMD. A G5 region spans residues 210–212; it reads SAL.

The protein belongs to the TRAFAC class translation factor GTPase superfamily. Classic translation factor GTPase family. CysN/NodQ subfamily. As to quaternary structure, heterodimer composed of CysD, the smaller subunit, and CysN.

The enzyme catalyses sulfate + ATP + H(+) = adenosine 5'-phosphosulfate + diphosphate. It functions in the pathway sulfur metabolism; hydrogen sulfide biosynthesis; sulfite from sulfate: step 1/3. In terms of biological role, with CysD forms the ATP sulfurylase (ATPS) that catalyzes the adenylation of sulfate producing adenosine 5'-phosphosulfate (APS) and diphosphate, the first enzymatic step in sulfur assimilation pathway. APS synthesis involves the formation of a high-energy phosphoric-sulfuric acid anhydride bond driven by GTP hydrolysis by CysN coupled to ATP hydrolysis by CysD. This chain is Sulfate adenylyltransferase subunit 1, found in Shewanella oneidensis (strain ATCC 700550 / JCM 31522 / CIP 106686 / LMG 19005 / NCIMB 14063 / MR-1).